The sequence spans 435 residues: Adenylosuccinate synthetase (435 aa).

GTP-binding positions include 19–25 (GDEGKGK) and 49–51 (GHT). The active-site Proton acceptor is the aspartate 20. Positions 20 and 49 each coordinate Mg(2+). IMP is bound by residues 20–23 (DEGK), 47–50 (NAGH), threonine 139, arginine 153, asparagine 233, threonine 248, and arginine 312. Histidine 50 acts as the Proton donor in catalysis. 308 to 314 (VTTGRKR) is a binding site for substrate. GTP contacts are provided by residues arginine 314, 340-342 (KLD), and 422-424 (GVG).

The protein belongs to the adenylosuccinate synthetase family. In terms of assembly, homodimer. It depends on Mg(2+) as a cofactor.

It is found in the cytoplasm. It catalyses the reaction IMP + L-aspartate + GTP = N(6)-(1,2-dicarboxyethyl)-AMP + GDP + phosphate + 2 H(+). It functions in the pathway purine metabolism; AMP biosynthesis via de novo pathway; AMP from IMP: step 1/2. Its function is as follows. Plays an important role in the de novo pathway and in the salvage pathway of purine nucleotide biosynthesis. Catalyzes the first committed step in the biosynthesis of AMP from IMP. In Brugia malayi (Filarial nematode worm), this protein is Adenylosuccinate synthetase.